Here is a 246-residue protein sequence, read N- to C-terminus: Orotidine 5'-phosphate decarboxylase (246 aa).

Substrate is bound by residues D22, K44, 71–80, T130, R191, Q201, G221, and R222; that span reads DLKYHDIPHT. K73 (proton donor) is an active-site residue.

It belongs to the OMP decarboxylase family. Type 1 subfamily. In terms of assembly, homodimer.

The catalysed reaction is orotidine 5'-phosphate + H(+) = UMP + CO2. It functions in the pathway pyrimidine metabolism; UMP biosynthesis via de novo pathway; UMP from orotate: step 2/2. Functionally, catalyzes the decarboxylation of orotidine 5'-monophosphate (OMP) to uridine 5'-monophosphate (UMP). The protein is Orotidine 5'-phosphate decarboxylase of Neisseria meningitidis serogroup A / serotype 4A (strain DSM 15465 / Z2491).